We begin with the raw amino-acid sequence, 454 residues long: Bifunctional protein GlmU (454 aa).

Residues 1–228 (MTLPLHVVIL…PQDVEGANDP (228 aa)) are pyrophosphorylase. Residues 10–13 (LAAG), K24, Q76, 81–82 (GT), 103–105 (YGD), G138, E153, N168, and N226 contribute to the UDP-N-acetyl-alpha-D-glucosamine site. D105 lines the Mg(2+) pocket. Position 226 (N226) interacts with Mg(2+). The linker stretch occupies residues 229–249 (WQLAQLERAWQLRAARALCLQ). The segment at 250-454 (GVRMADPARV…IEGWERPKKK (205 aa)) is N-acetyltransferase. 2 residues coordinate UDP-N-acetyl-alpha-D-glucosamine: R332 and K350. H362 acts as the Proton acceptor in catalysis. Residues Y365 and N376 each contribute to the UDP-N-acetyl-alpha-D-glucosamine site. Residues A379, 385-386 (NY), S404, A422, and R439 contribute to the acetyl-CoA site.

This sequence in the N-terminal section; belongs to the N-acetylglucosamine-1-phosphate uridyltransferase family. The protein in the C-terminal section; belongs to the transferase hexapeptide repeat family. As to quaternary structure, homotrimer. The cofactor is Mg(2+).

The protein resides in the cytoplasm. The enzyme catalyses alpha-D-glucosamine 1-phosphate + acetyl-CoA = N-acetyl-alpha-D-glucosamine 1-phosphate + CoA + H(+). It catalyses the reaction N-acetyl-alpha-D-glucosamine 1-phosphate + UTP + H(+) = UDP-N-acetyl-alpha-D-glucosamine + diphosphate. Its pathway is nucleotide-sugar biosynthesis; UDP-N-acetyl-alpha-D-glucosamine biosynthesis; N-acetyl-alpha-D-glucosamine 1-phosphate from alpha-D-glucosamine 6-phosphate (route II): step 2/2. It functions in the pathway nucleotide-sugar biosynthesis; UDP-N-acetyl-alpha-D-glucosamine biosynthesis; UDP-N-acetyl-alpha-D-glucosamine from N-acetyl-alpha-D-glucosamine 1-phosphate: step 1/1. It participates in bacterial outer membrane biogenesis; LPS lipid A biosynthesis. Catalyzes the last two sequential reactions in the de novo biosynthetic pathway for UDP-N-acetylglucosamine (UDP-GlcNAc). The C-terminal domain catalyzes the transfer of acetyl group from acetyl coenzyme A to glucosamine-1-phosphate (GlcN-1-P) to produce N-acetylglucosamine-1-phosphate (GlcNAc-1-P), which is converted into UDP-GlcNAc by the transfer of uridine 5-monophosphate (from uridine 5-triphosphate), a reaction catalyzed by the N-terminal domain. This Xanthomonas campestris pv. campestris (strain B100) protein is Bifunctional protein GlmU.